The following is a 486-amino-acid chain: Cobyric acid synthase (486 aa).

A GATase cobBQ-type domain is found at Val248–Ala439. Cys328 (nucleophile) is an active-site residue. Residue His431 is part of the active site.

It belongs to the CobB/CobQ family. CobQ subfamily.

The protein operates within cofactor biosynthesis; adenosylcobalamin biosynthesis. Its function is as follows. Catalyzes amidations at positions B, D, E, and G on adenosylcobyrinic A,C-diamide. NH(2) groups are provided by glutamine, and one molecule of ATP is hydrogenolyzed for each amidation. The polypeptide is Cobyric acid synthase (Burkholderia mallei (strain ATCC 23344)).